An 89-amino-acid polypeptide reads, in one-letter code: Small ribosomal subunit protein uS15 (89 aa).

Belongs to the universal ribosomal protein uS15 family. Part of the 30S ribosomal subunit. Forms a bridge to the 50S subunit in the 70S ribosome, contacting the 23S rRNA.

In terms of biological role, one of the primary rRNA binding proteins, it binds directly to 16S rRNA where it helps nucleate assembly of the platform of the 30S subunit by binding and bridging several RNA helices of the 16S rRNA. Its function is as follows. Forms an intersubunit bridge (bridge B4) with the 23S rRNA of the 50S subunit in the ribosome. The polypeptide is Small ribosomal subunit protein uS15 (Staphylococcus saprophyticus subsp. saprophyticus (strain ATCC 15305 / DSM 20229 / NCIMB 8711 / NCTC 7292 / S-41)).